The chain runs to 166 residues: Protein UTR5 (166 aa).

This is Protein UTR5 (UTR5) from Saccharomyces cerevisiae (strain ATCC 204508 / S288c) (Baker's yeast).